The primary structure comprises 158 residues: Chromobox protein homolog 7 (158 aa).

The Chromo domain occupies 11–69 (FAVESIRKKRVRKGKVEYLVKWKGWPPKYSTWEPEEHILDPRLVMAYEEKEERDRASGY). The disordered stretch occupies residues 60 to 127 (KEERDRASGY…WTPTLPSSEV (68 aa)). Residues 68–78 (GYRKRGPKPRR) show a composition bias toward basic residues.

In terms of assembly, component of a PRC1-like complex. Distinct PRC1-like core complexes are composed of a RING1 subunit (RING1B or RING1A), one of the six PCGF proteins (PCGF1-6), one PHC protein (PHC1-3) and one of the CBX proteins (CBX2, CBX4, CBX6, CBX7 or CBX8). The composition of the PRC1 complex may differ between the PRC1 complex in pluripotent embryonic stem cells containing RNF2, CBX7 and PCGF2, and the PRC1 complex in differentiating cells containing RNF2, CBX2, CBX4 and BMI1. Interacts with RING1. Interacts with RNF2, PHC1 and PCGF2. Interacts (via chromodomain) with histone H3K9Me3 and H3K27me3. Interacts with H3K9Me2 and H4K20Me1. Interacts (via chromodomain) with single-stranded and double-stranded RNA; RNA binding seems to be required for the localization to chromatin. Interacts with PCGF1, PCGF3, PCGF5 and PCGF6. As to expression, expressed in embryonic stem cells.

It is found in the nucleus. It localises to the chromosome. In terms of biological role, component of a Polycomb group (PcG) multiprotein PRC1-like complex, a complex class required to maintain the transcriptionally repressive state of many genes, including Hox genes, throughout development. PcG PRC1 complex acts via chromatin remodeling and modification of histones; it mediates monoubiquitination of histone H2A 'Lys-119', rendering chromatin heritably changed in its expressibility. Promotes histone H3 trimethylation at 'Lys-9' (H3K9me3). Binds to histone H3 trimethylated at 'Lys-9' (H3K9me3) or at 'Lys-27' (H3K27me3). Trimethylation at 'Lys-27' (H3K27me3) is important for chromatin recruitment. May possibly also bind trimethylated lysine residues in other proteins (in vitro). Binds non-coding, single-stranded RNA and double-stranded RNA. Plays a role in the timely repression of differentiation-specific genes in pluripotent embryonic stem cells to maintain the undifferentiated state. Regulator of cellular lifespan by maintaining the repression of CDKN2A, but not by inducing telomerase activity. The polypeptide is Chromobox protein homolog 7 (Cbx7) (Mus musculus (Mouse)).